The following is a 618-amino-acid chain: 1-deoxy-D-xylulose-5-phosphate synthase (618 aa).

Thiamine diphosphate contacts are provided by residues His-72 and 113–115 (GHA). Asp-144 is a Mg(2+) binding site. Residues 145-146 (GA), Asn-173, His-284, and Glu-359 contribute to the thiamine diphosphate site. Asn-173 contributes to the Mg(2+) binding site.

This sequence belongs to the transketolase family. DXPS subfamily. Homodimer. It depends on Mg(2+) as a cofactor. Thiamine diphosphate is required as a cofactor.

It carries out the reaction D-glyceraldehyde 3-phosphate + pyruvate + H(+) = 1-deoxy-D-xylulose 5-phosphate + CO2. It participates in metabolic intermediate biosynthesis; 1-deoxy-D-xylulose 5-phosphate biosynthesis; 1-deoxy-D-xylulose 5-phosphate from D-glyceraldehyde 3-phosphate and pyruvate: step 1/1. In terms of biological role, catalyzes the acyloin condensation reaction between C atoms 2 and 3 of pyruvate and glyceraldehyde 3-phosphate to yield 1-deoxy-D-xylulose-5-phosphate (DXP). The chain is 1-deoxy-D-xylulose-5-phosphate synthase from Dictyoglomus turgidum (strain DSM 6724 / Z-1310).